Consider the following 451-residue polypeptide: NADH-quinone oxidoreductase subunit H (451 aa).

The next 9 membrane-spanning stretches (helical) occupy residues 30 to 50, 98 to 118, 138 to 158, 176 to 196, 213 to 233, 262 to 282, 302 to 322, 336 to 356, and 368 to 388; these read LIIV…LFMI, AVFI…FAVI, LPVA…GIVL, AAQV…VFLY, WGIL…VGET, LFYL…TTLF, WWPV…FIWL, QFGW…EAAI, and VIPF…ADLV.

Belongs to the complex I subunit 1 family. As to quaternary structure, NDH-1 is composed of 14 different subunits. Subunits NuoA, H, J, K, L, M, N constitute the membrane sector of the complex.

Its subcellular location is the cell membrane. It carries out the reaction a quinone + NADH + 5 H(+)(in) = a quinol + NAD(+) + 4 H(+)(out). NDH-1 shuttles electrons from NADH, via FMN and iron-sulfur (Fe-S) centers, to quinones in the respiratory chain. The immediate electron acceptor for the enzyme in this species is believed to be ubiquinone. Couples the redox reaction to proton translocation (for every two electrons transferred, four hydrogen ions are translocated across the cytoplasmic membrane), and thus conserves the redox energy in a proton gradient. This subunit may bind ubiquinone. The protein is NADH-quinone oxidoreductase subunit H of Acidothermus cellulolyticus (strain ATCC 43068 / DSM 8971 / 11B).